Consider the following 124-residue polypeptide: Small ribosomal subunit protein uS12 (124 aa).

D89 carries the 3-methylthioaspartic acid modification.

This sequence belongs to the universal ribosomal protein uS12 family. As to quaternary structure, part of the 30S ribosomal subunit. Contacts proteins S8 and S17. May interact with IF1 in the 30S initiation complex.

With S4 and S5 plays an important role in translational accuracy. Its function is as follows. Interacts with and stabilizes bases of the 16S rRNA that are involved in tRNA selection in the A site and with the mRNA backbone. Located at the interface of the 30S and 50S subunits, it traverses the body of the 30S subunit contacting proteins on the other side and probably holding the rRNA structure together. The combined cluster of proteins S8, S12 and S17 appears to hold together the shoulder and platform of the 30S subunit. This Buchnera aphidicola subsp. Schizaphis graminum (strain Sg) protein is Small ribosomal subunit protein uS12.